Reading from the N-terminus, the 82-residue chain is Cortexin-1 (82 aa).

Residues 1-20 (MSAPWTLSPEPLPPSTGPPV) are disordered. The helical transmembrane segment at 30–50 (TVFAFVLCLLVVLVLLMVRCV) threads the bilayer.

The protein belongs to the cortexin family. Neuron specific.

The protein localises to the membrane. Functionally, may mediate extracellular or intracellular signaling of cortical neurons during forebrain development. The sequence is that of Cortexin-1 (Ctxn1) from Rattus norvegicus (Rat).